A 545-amino-acid chain; its full sequence is Hydroxylamine reductase (545 aa).

[4Fe-4S] cluster contacts are provided by Cys3, Cys6, Cys15, and Cys21. The hybrid [4Fe-2O-2S] cluster site is built by His240, Glu264, Cys309, Cys401, Cys429, Cys454, Glu488, and Lys490. Cys401 carries the cysteine persulfide modification.

This sequence belongs to the HCP family. Requires [4Fe-4S] cluster as cofactor. It depends on hybrid [4Fe-2O-2S] cluster as a cofactor.

Its subcellular location is the cytoplasm. The enzyme catalyses A + NH4(+) + H2O = hydroxylamine + AH2 + H(+). In terms of biological role, catalyzes the reduction of hydroxylamine to form NH(3) and H(2)O. The chain is Hydroxylamine reductase from Rippkaea orientalis (strain PCC 8801 / RF-1) (Cyanothece sp. (strain PCC 8801)).